A 151-amino-acid polypeptide reads, in one-letter code: MAVERIVISTGKRKRAIARAVIRPGRGRVWINGVPLEIYPIEMARIKMMEPLLIAGEGVRSLVDIRVRVEGGGVMGQADAVRMAIARGLVEFFRCEESDDELCRMMDKISRDLRTAFLEHDRTMLVGDPRRTEPEKYMRYSARRRWQKSYR.

The protein belongs to the universal ribosomal protein uS9 family.

The sequence is that of Small ribosomal subunit protein uS9 (rps9) from Aeropyrum pernix (strain ATCC 700893 / DSM 11879 / JCM 9820 / NBRC 100138 / K1).